Reading from the N-terminus, the 23-residue chain is Unknown protein 1 (23 aa).

The sequence is that of Unknown protein 1 from Coniferiporia sulphurascens (Laminated root rot fungus).